An 84-amino-acid chain; its full sequence is Small ribosomal subunit protein bS16 (84 aa).

Belongs to the bacterial ribosomal protein bS16 family.

This chain is Small ribosomal subunit protein bS16, found in Thioalkalivibrio sulfidiphilus (strain HL-EbGR7).